A 115-amino-acid chain; its full sequence is MTLDPQIAARLKRNADGLVTAVVQERGSKDVLMVAWMDDAALARTLETREATYYSRSRGQQWVKGETSGHTQYVHSVRLDCDGDTVLLTVDQVGGACHTGDHSCFDADVLLHPQD.

Aspartate 80 contacts Mg(2+). Residue cysteine 81 coordinates Zn(2+). The Mg(2+) site is built by aspartate 82 and aspartate 84. Residues cysteine 97 and cysteine 104 each contribute to the Zn(2+) site.

The protein belongs to the PRA-CH family. As to quaternary structure, homodimer. Requires Mg(2+) as cofactor. Zn(2+) is required as a cofactor.

The protein resides in the cytoplasm. The catalysed reaction is 1-(5-phospho-beta-D-ribosyl)-5'-AMP + H2O = 1-(5-phospho-beta-D-ribosyl)-5-[(5-phospho-beta-D-ribosylamino)methylideneamino]imidazole-4-carboxamide. Its pathway is amino-acid biosynthesis; L-histidine biosynthesis; L-histidine from 5-phospho-alpha-D-ribose 1-diphosphate: step 3/9. Its function is as follows. Catalyzes the hydrolysis of the adenine ring of phosphoribosyl-AMP. The sequence is that of Phosphoribosyl-AMP cyclohydrolase from Mycolicibacterium paratuberculosis (strain ATCC BAA-968 / K-10) (Mycobacterium paratuberculosis).